The primary structure comprises 324 residues: HSF-like protein (324 aa).

The signal sequence occupies residues 1-19 (MNSLVALVLLGQIIGSTVS). Cystatin fetuin-A-type domains lie at 21-130 (QLGP…VKCS) and 141-254 (RDCP…SDCV). Disulfide bonds link C28-C315, C85-C96, C110-C129, C143-C146, C205-C217, and C230-C253. Residue N95 is glycosylated (N-linked (GlcNAc...) asparagine). Residue N204 is glycosylated (N-linked (GlcNAc...) asparagine). N282 is a glycosylation site (N-linked (GlcNAc...) asparagine).

It belongs to the fetuin family. Homodimer. As to expression, expressed by the liver.

It is found in the secreted. Its function is as follows. May not have antihemorrhagic activity. The chain is HSF-like protein from Protobothrops flavoviridis (Habu).